The following is a 167-amino-acid chain: Crossover junction endodeoxyribonuclease RuvC (167 aa).

Residues Asp-14, Glu-75, and Asp-147 contribute to the active site. 3 residues coordinate Mg(2+): Asp-14, Glu-75, and Asp-147.

The protein belongs to the RuvC family. As to quaternary structure, homodimer which binds Holliday junction (HJ) DNA. The HJ becomes 2-fold symmetrical on binding to RuvC with unstacked arms; it has a different conformation from HJ DNA in complex with RuvA. In the full resolvosome a probable DNA-RuvA(4)-RuvB(12)-RuvC(2) complex forms which resolves the HJ. Mg(2+) is required as a cofactor.

The protein localises to the cytoplasm. The enzyme catalyses Endonucleolytic cleavage at a junction such as a reciprocal single-stranded crossover between two homologous DNA duplexes (Holliday junction).. In terms of biological role, the RuvA-RuvB-RuvC complex processes Holliday junction (HJ) DNA during genetic recombination and DNA repair. Endonuclease that resolves HJ intermediates. Cleaves cruciform DNA by making single-stranded nicks across the HJ at symmetrical positions within the homologous arms, yielding a 5'-phosphate and a 3'-hydroxyl group; requires a central core of homology in the junction. The consensus cleavage sequence is 5'-(A/T)TT(C/G)-3'. Cleavage occurs on the 3'-side of the TT dinucleotide at the point of strand exchange. HJ branch migration catalyzed by RuvA-RuvB allows RuvC to scan DNA until it finds its consensus sequence, where it cleaves and resolves the cruciform DNA. The polypeptide is Crossover junction endodeoxyribonuclease RuvC (Synechocystis sp. (strain ATCC 27184 / PCC 6803 / Kazusa)).